The chain runs to 359 residues: Peptide chain release factor 1 (359 aa).

Position 233 is an N5-methylglutamine (Q233).

It belongs to the prokaryotic/mitochondrial release factor family. In terms of processing, methylated by PrmC. Methylation increases the termination efficiency of RF1.

The protein resides in the cytoplasm. Its function is as follows. Peptide chain release factor 1 directs the termination of translation in response to the peptide chain termination codons UAG and UAA. This chain is Peptide chain release factor 1, found in Cytophaga hutchinsonii (strain ATCC 33406 / DSM 1761 / CIP 103989 / NBRC 15051 / NCIMB 9469 / D465).